Consider the following 448-residue polypeptide: Asparagine--tRNA ligase (448 aa).

It belongs to the class-II aminoacyl-tRNA synthetase family. As to quaternary structure, homodimer.

It localises to the cytoplasm. The enzyme catalyses tRNA(Asn) + L-asparagine + ATP = L-asparaginyl-tRNA(Asn) + AMP + diphosphate + H(+). The sequence is that of Asparagine--tRNA ligase from Streptococcus thermophilus (strain ATCC BAA-491 / LMD-9).